We begin with the raw amino-acid sequence, 302 residues long: 4-hydroxy-tetrahydrodipicolinate synthase (302 aa).

Residue Thr-55 participates in pyruvate binding. Residue Tyr-144 is the Proton donor/acceptor of the active site. The Schiff-base intermediate with substrate role is filled by Lys-172. Residue Val-214 coordinates pyruvate.

It belongs to the DapA family. Homotetramer; dimer of dimers.

It is found in the cytoplasm. It catalyses the reaction L-aspartate 4-semialdehyde + pyruvate = (2S,4S)-4-hydroxy-2,3,4,5-tetrahydrodipicolinate + H2O + H(+). It functions in the pathway amino-acid biosynthesis; L-lysine biosynthesis via DAP pathway; (S)-tetrahydrodipicolinate from L-aspartate: step 3/4. Catalyzes the condensation of (S)-aspartate-beta-semialdehyde [(S)-ASA] and pyruvate to 4-hydroxy-tetrahydrodipicolinate (HTPA). This Prochlorococcus marinus (strain NATL2A) protein is 4-hydroxy-tetrahydrodipicolinate synthase.